Here is a 91-residue protein sequence, read N- to C-terminus: Small ribosomal subunit protein uS19 (91 aa).

The protein belongs to the universal ribosomal protein uS19 family.

In terms of biological role, protein S19 forms a complex with S13 that binds strongly to the 16S ribosomal RNA. The chain is Small ribosomal subunit protein uS19 from Burkholderia cenocepacia (strain HI2424).